Reading from the N-terminus, the 134-residue chain is Small ribosomal subunit protein uS8c (134 aa).

Belongs to the universal ribosomal protein uS8 family. In terms of assembly, part of the 30S ribosomal subunit.

The protein resides in the plastid. It is found in the chloroplast. In terms of biological role, one of the primary rRNA binding proteins, it binds directly to 16S rRNA central domain where it helps coordinate assembly of the platform of the 30S subunit. The protein is Small ribosomal subunit protein uS8c (rps8) of Chloranthus spicatus (Chulantree).